The following is a 322-amino-acid chain: Ribosomal RNA small subunit methyltransferase H (322 aa).

S-adenosyl-L-methionine-binding positions include 43 to 45, D60, F86, D104, and Q111; that span reads GGY.

The protein belongs to the methyltransferase superfamily. RsmH family.

The protein resides in the cytoplasm. The enzyme catalyses cytidine(1402) in 16S rRNA + S-adenosyl-L-methionine = N(4)-methylcytidine(1402) in 16S rRNA + S-adenosyl-L-homocysteine + H(+). Its function is as follows. Specifically methylates the N4 position of cytidine in position 1402 (C1402) of 16S rRNA. The sequence is that of Ribosomal RNA small subunit methyltransferase H from Caulobacter sp. (strain K31).